Reading from the N-terminus, the 406-residue chain is Tyrosine--tRNA ligase (406 aa).

Tyr-35 provides a ligand contact to L-tyrosine. Positions 40-49 (PTADSLHVGH) match the 'HIGH' region motif. L-tyrosine-binding residues include Tyr-168 and Gln-172. A 'KMSKS' region motif is present at residues 228 to 232 (KMGKT). An ATP-binding site is contributed by Lys-231. In terms of domain architecture, S4 RNA-binding spans 340 to 404 (STVLDIIAKT…RGKKNYNKIE (65 aa)).

It belongs to the class-I aminoacyl-tRNA synthetase family. TyrS type 1 subfamily. In terms of assembly, homodimer.

The protein resides in the cytoplasm. It catalyses the reaction tRNA(Tyr) + L-tyrosine + ATP = L-tyrosyl-tRNA(Tyr) + AMP + diphosphate + H(+). Functionally, catalyzes the attachment of tyrosine to tRNA(Tyr) in a two-step reaction: tyrosine is first activated by ATP to form Tyr-AMP and then transferred to the acceptor end of tRNA(Tyr). This is Tyrosine--tRNA ligase from Clostridium botulinum (strain Alaska E43 / Type E3).